The primary structure comprises 801 residues: Endonuclease MutS2 (801 aa).

336–343 (GPNTGGKT) is a binding site for ATP. Residues 696–721 (AQQSKAKQKQQKIVKTKTASGSARAT) form a disordered region. A compositionally biased stretch (basic residues) spans 701–710 (AKQKQQKIVK). The Smr domain maps to 726 to 801 (LDLRGVRYEA…GDGATIAELS (76 aa)).

This sequence belongs to the DNA mismatch repair MutS family. MutS2 subfamily. Homodimer. Binds to stalled ribosomes, contacting rRNA.

Endonuclease that is involved in the suppression of homologous recombination and thus may have a key role in the control of bacterial genetic diversity. Functionally, acts as a ribosome collision sensor, splitting the ribosome into its 2 subunits. Detects stalled/collided 70S ribosomes which it binds and splits by an ATP-hydrolysis driven conformational change. Acts upstream of the ribosome quality control system (RQC), a ribosome-associated complex that mediates the extraction of incompletely synthesized nascent chains from stalled ribosomes and their subsequent degradation. Probably generates substrates for RQC. The polypeptide is Endonuclease MutS2 (Leuconostoc citreum (strain KM20)).